Consider the following 410-residue polypeptide: Calsequestrin-2 (410 aa).

The signal sequence occupies residues 1–19 (MKRTHLFIAGLYLLASCRA). Positions 221–242 (MDEPIAIPDKPYTEEELVEFVK) are calcium regulated hydrophobic site. Phosphotyrosine is present on Tyr-282. Asn-335 and Asn-395 each carry an N-linked (GlcNAc...) asparagine glycan. The segment at 364–410 (DVLSGKINTEDDDNEEGDDGDDDEDDDDDDGNNSDEESNDDSDDDDE) is disordered. Residues 373–410 (EDDDNEEGDDGDDDEDDDDDDGNNSDEESNDDSDDDDE) are compositionally biased toward acidic residues. Residues Ser-397, Ser-401, and Ser-405 each carry the phosphoserine; by CK2 modification.

Belongs to the calsequestrin family. In terms of assembly, interacts with ASPH. Monomer, homodimer and homooligomer. Mostly monomeric in the absence of calcium. Forms higher oligomers in a calcium-dependent manner. Dimers associate to form tetramers, that then form linear homomer chains. Interacts with TRDN. Phosphorylation in the C-terminus, probably by CK2, moderately increases calcium buffering capacity. Post-translationally, N-glycosylated. In terms of tissue distribution, detected in heart muscle (at protein level).

It localises to the sarcoplasmic reticulum lumen. Functionally, calsequestrin is a high-capacity, moderate affinity, calcium-binding protein and thus acts as an internal calcium store in muscle. Calcium ions are bound by clusters of acidic residues at the protein surface, especially at the interface between subunits. Can bind around 60 Ca(2+) ions. Regulates the release of lumenal Ca(2+) via the calcium release channel RYR2; this plays an important role in triggering muscle contraction. Plays a role in excitation-contraction coupling in the heart and in regulating the rate of heart beats. This is Calsequestrin-2 (CASQ2) from Canis lupus familiaris (Dog).